The sequence spans 314 residues: tRNA N6-adenosine threonylcarbamoyltransferase (314 aa).

Fe cation contacts are provided by histidine 106, histidine 110, and tyrosine 127. Substrate-binding positions include 127 to 131, aspartate 159, glycine 172, glutamate 176, and asparagine 255; that span reads YVSGA. Fe cation is bound at residue aspartate 283.

It belongs to the KAE1 / TsaD family. It depends on Fe(2+) as a cofactor.

It is found in the cytoplasm. The enzyme catalyses L-threonylcarbamoyladenylate + adenosine(37) in tRNA = N(6)-L-threonylcarbamoyladenosine(37) in tRNA + AMP + H(+). Required for the formation of a threonylcarbamoyl group on adenosine at position 37 (t(6)A37) in tRNAs that read codons beginning with adenine. Is probably involved in the transfer of the threonylcarbamoyl moiety of threonylcarbamoyl-AMP (TC-AMP) to the N6 group of A37. In Nanoarchaeum equitans (strain Kin4-M), this protein is tRNA N6-adenosine threonylcarbamoyltransferase.